Consider the following 436-residue polypeptide: Trigger factor (436 aa).

Positions 161 to 246 constitute a PPIase FKBP-type domain; that stretch reads GDQLNIDFVG…VNSVSAPQLP (86 aa).

The protein belongs to the FKBP-type PPIase family. Tig subfamily.

The protein localises to the cytoplasm. The enzyme catalyses [protein]-peptidylproline (omega=180) = [protein]-peptidylproline (omega=0). Functionally, involved in protein export. Acts as a chaperone by maintaining the newly synthesized protein in an open conformation. Functions as a peptidyl-prolyl cis-trans isomerase. The chain is Trigger factor from Ectopseudomonas mendocina (strain ymp) (Pseudomonas mendocina).